We begin with the raw amino-acid sequence, 221 residues long: MSGRRTPGAASDGSAGGQAAVIIAVKRLTAAKTRLAPIFSAATREEVVLAMLVDTITAASTVAPVTVVTPDEVAADAARQLGAGVLADPTPEGHHNPLNNAIMAAEEHLRAGTPNIVVLQGDLPAMQPRELAEALAAARTYPRSFVGDRHGTGTSALFAFGVPLQPRFGADSATHHRHSGAIELTGAWPGLRCDIDTAEDLRTARRLGVGPATAQAIAAHR.

Residues Thr-154, Gly-169, and Ser-172 each coordinate phosphoenolpyruvate.

It belongs to the CofC family.

The enzyme catalyses phosphoenolpyruvate + GTP + H(+) = enolpyruvoyl-2-diphospho-5'-guanosine + diphosphate. The protein operates within cofactor biosynthesis; coenzyme F420 biosynthesis. In terms of biological role, guanylyltransferase that catalyzes the activation of phosphoenolpyruvate (PEP) as enolpyruvoyl-2-diphospho-5'-guanosine, via the condensation of PEP with GTP. It is involved in the biosynthesis of coenzyme F420, a hydride carrier cofactor. This chain is Phosphoenolpyruvate guanylyltransferase, found in Mycolicibacterium smegmatis (strain ATCC 700084 / mc(2)155) (Mycobacterium smegmatis).